The chain runs to 271 residues: Glutamate racemase (271 aa).

Substrate contacts are provided by residues 10 to 11 and 42 to 43; these read DS and YG. Cys-73 serves as the catalytic Proton donor/acceptor. Substrate is bound at residue 74–75; it reads NT. The Proton donor/acceptor role is filled by Cys-183. 184–185 serves as a coordination point for substrate; the sequence is TH.

The protein belongs to the aspartate/glutamate racemases family.

It catalyses the reaction L-glutamate = D-glutamate. It functions in the pathway cell wall biogenesis; peptidoglycan biosynthesis. Its function is as follows. Provides the (R)-glutamate required for cell wall biosynthesis. This chain is Glutamate racemase, found in Streptococcus thermophilus (strain CNRZ 1066).